Reading from the N-terminus, the 394-residue chain is Elongation factor Tu 2 (394 aa).

Residues 10–204 (KPHVNVGTIG…FLDSYIPEPE (195 aa)) enclose the tr-type G domain. A G1 region spans residues 19–26 (GHVDHGKT). 19–26 (GHVDHGKT) serves as a coordination point for GTP. A Mg(2+)-binding site is contributed by threonine 26. Positions 60-64 (GITIN) are G2. The segment at 81–84 (DCPG) is G3. GTP is bound by residues 81 to 85 (DCPGH) and 136 to 139 (NKCD). Residues 136–139 (NKCD) form a G4 region. The interval 174-176 (SAL) is G5.

This sequence belongs to the TRAFAC class translation factor GTPase superfamily. Classic translation factor GTPase family. EF-Tu/EF-1A subfamily. In terms of assembly, monomer.

It is found in the cytoplasm. The enzyme catalyses GTP + H2O = GDP + phosphate + H(+). In terms of biological role, GTP hydrolase that promotes the GTP-dependent binding of aminoacyl-tRNA to the A-site of ribosomes during protein biosynthesis. In Shigella flexneri serotype 5b (strain 8401), this protein is Elongation factor Tu 2.